The sequence spans 170 residues: Peptide deformylase (170 aa).

Cys91 and His133 together coordinate Fe cation. The active site involves Glu134. A Fe cation-binding site is contributed by His137.

It belongs to the polypeptide deformylase family. Fe(2+) is required as a cofactor.

It catalyses the reaction N-terminal N-formyl-L-methionyl-[peptide] + H2O = N-terminal L-methionyl-[peptide] + formate. Functionally, removes the formyl group from the N-terminal Met of newly synthesized proteins. Requires at least a dipeptide for an efficient rate of reaction. N-terminal L-methionine is a prerequisite for activity but the enzyme has broad specificity at other positions. This is Peptide deformylase from Actinobacillus pleuropneumoniae serotype 7 (strain AP76).